The primary structure comprises 470 residues: Shutoff alkaline exonuclease (470 aa).

It belongs to the herpesviridae alkaline nuclease family. In terms of assembly, forms a complex with the DNA polymerase, the DNA polymerase processivity factor, and the major DNA binding protein.

The protein resides in the host nucleus. The protein localises to the host cytoplasm. Plays a role in processing non linear or branched viral DNA intermediates in order to promote the production of mature packaged unit-length linear progeny viral DNA molecules. Exhibits endonuclease and exonuclease activities and accepts both double-stranded and single-stranded DNA as substrate. Exonuclease digestion of DNA is in the 5'-&gt; 3' direction and the products are 5'-monophosphate nucleosides. Additionally, forms a recombinase with the major DNA-binding protein, which displays strand exchange activity. Also acts as a cytoplasmic RNA endonuclease that induces degradation of the majority of the cellular messenger RNAs during early lytic infection. The resulting inhibition of cellular protein synthesis serves to ensure maximal viral gene expression and evasion from host immune response. Internally cleaves host mRNAs which are then degraded by the cellular exonuclease XRN1. Bypasses therefore the regulatory steps of deadenylation and decapping normally required for XRN1 activation. This Epstein-Barr virus (strain GD1) (HHV-4) protein is Shutoff alkaline exonuclease.